The following is a 969-amino-acid chain: Dual serine/threonine and tyrosine protein kinase (969 aa).

Positions 7-37 (QEFRRYLRNRNQLQHVLEETQQALELINLEN) form a coiled coil. The region spanning 632 to 894 (PHCAEEIGRG…PLLGAIVPVL (263 aa)) is the Protein kinase domain. ATP contacts are provided by residues 638-646 (IGRGQYGIV) and Lys662. The active-site Proton acceptor is Asp760. The tract at residues 904–945 (SKSLQEVSSDKLQESSTDSRNPALALAEPYNQRGTVVSPPPT) is disordered.

This sequence belongs to the protein kinase superfamily. Ser/Thr protein kinase family.

The protein resides in the cytoplasm. The catalysed reaction is L-seryl-[protein] + ATP = O-phospho-L-seryl-[protein] + ADP + H(+). It catalyses the reaction L-threonyl-[protein] + ATP = O-phospho-L-threonyl-[protein] + ADP + H(+). The enzyme catalyses L-tyrosyl-[protein] + ATP = O-phospho-L-tyrosyl-[protein] + ADP + H(+). In Apis mellifera (Honeybee), this protein is Dual serine/threonine and tyrosine protein kinase.